The primary structure comprises 275 residues: Nitrogenase iron protein 1 (275 aa).

9–16 (GKGGIGKS) is an ATP binding site. [4Fe-4S] cluster is bound at residue C98. R101 carries the post-translational modification ADP-ribosylarginine; by dinitrogenase reductase ADP-ribosyltransferase. C132 serves as a coordination point for [4Fe-4S] cluster.

The protein belongs to the NifH/BchL/ChlL family. Homodimer. It depends on [4Fe-4S] cluster as a cofactor. In terms of processing, the reversible ADP-ribosylation of Arg-101 inactivates the nitrogenase reductase and regulates nitrogenase activity.

The enzyme catalyses N2 + 8 reduced [2Fe-2S]-[ferredoxin] + 16 ATP + 16 H2O = H2 + 8 oxidized [2Fe-2S]-[ferredoxin] + 2 NH4(+) + 16 ADP + 16 phosphate + 6 H(+). The key enzymatic reactions in nitrogen fixation are catalyzed by the nitrogenase complex, which has 2 components: the iron protein and the molybdenum-iron protein. The sequence is that of Nitrogenase iron protein 1 (nifH1) from Methanobacterium ivanovii.